We begin with the raw amino-acid sequence, 486 residues long: Glutamate--tRNA ligase (486 aa).

Positions 11–21 match the 'HIGH' region motif; it reads PSPTGLLHIGN. A 'KMSKS' region motif is present at residues 255–259; it reads KLSKR. An ATP-binding site is contributed by Lys258.

The protein belongs to the class-I aminoacyl-tRNA synthetase family. Glutamate--tRNA ligase type 1 subfamily. Monomer.

The protein resides in the cytoplasm. The enzyme catalyses tRNA(Glu) + L-glutamate + ATP = L-glutamyl-tRNA(Glu) + AMP + diphosphate. Its function is as follows. Catalyzes the attachment of glutamate to tRNA(Glu) in a two-step reaction: glutamate is first activated by ATP to form Glu-AMP and then transferred to the acceptor end of tRNA(Glu). The protein is Glutamate--tRNA ligase of Streptococcus pneumoniae serotype 19F (strain G54).